We begin with the raw amino-acid sequence, 369 residues long: Aminomethyltransferase (369 aa).

Belongs to the GcvT family. As to quaternary structure, the glycine cleavage system is composed of four proteins: P, T, L and H.

The catalysed reaction is N(6)-[(R)-S(8)-aminomethyldihydrolipoyl]-L-lysyl-[protein] + (6S)-5,6,7,8-tetrahydrofolate = N(6)-[(R)-dihydrolipoyl]-L-lysyl-[protein] + (6R)-5,10-methylene-5,6,7,8-tetrahydrofolate + NH4(+). In terms of biological role, the glycine cleavage system catalyzes the degradation of glycine. The protein is Aminomethyltransferase of Xanthomonas oryzae pv. oryzae (strain MAFF 311018).